A 1378-amino-acid polypeptide reads, in one-letter code: DNA-directed RNA polymerase subunit beta (1378 aa).

Belongs to the RNA polymerase beta chain family. In terms of assembly, the RNAP catalytic core consists of 2 alpha, 1 beta, 1 beta' and 1 omega subunit. When a sigma factor is associated with the core the holoenzyme is formed, which can initiate transcription.

It catalyses the reaction RNA(n) + a ribonucleoside 5'-triphosphate = RNA(n+1) + diphosphate. Functionally, DNA-dependent RNA polymerase catalyzes the transcription of DNA into RNA using the four ribonucleoside triphosphates as substrates. In Sorangium cellulosum (strain So ce56) (Polyangium cellulosum (strain So ce56)), this protein is DNA-directed RNA polymerase subunit beta.